The chain runs to 277 residues: Glutamate racemase (277 aa).

Substrate contacts are provided by residues 25-26 and 57-58; these read DS and YG. The active-site Proton donor/acceptor is Cys-89. Residue 90–91 coordinates substrate; it reads NT. Cys-204 acts as the Proton donor/acceptor in catalysis. 205 to 206 contributes to the substrate binding site; that stretch reads TH.

It belongs to the aspartate/glutamate racemases family.

It catalyses the reaction L-glutamate = D-glutamate. It functions in the pathway cell wall biogenesis; peptidoglycan biosynthesis. Functionally, provides the (R)-glutamate required for cell wall biosynthesis. The sequence is that of Glutamate racemase from Brucella abortus (strain 2308).